Reading from the N-terminus, the 25-residue chain is Caerin 1.1 (25 aa).

Position 25 is a leucine amide (leucine 25).

Expressed by the skin dorsal glands.

The protein localises to the secreted. In terms of biological role, antibacterial peptide with wide spectrum of activity. Active against the Gram-positive bacteria B.cereus (MIC=50 ug/ml), E.faecalis (MIC=25 ug/ml), L.lactis (MIC=1.5 ug/ml), L.innocua (MIC=25 ug/ml), S.aureus (MIC=3 ug/ml), S.epidermidis (MIC=12 ug/ml) and S.uberis (MIC=12 ug/ml), and against the Gram-negative bacteria E.coli (MIC=100 ug/ml) and P.multocida (MIC=25 ug/ml). The polypeptide is Caerin 1.1 (Litoria peronii (Emerald spotted tree frog)).